Consider the following 645-residue polypeptide: Threonine--tRNA ligase (645 aa).

In terms of domain architecture, TGS spans 3-64; that stretch reads DMINITFPDG…EQDGTITIVT (62 aa). Residues 247–544 are catalytic; the sequence is DHRKLGKELG…LLEEYKGAFP (298 aa). Residues C340, H391, and H521 each coordinate Zn(2+).

This sequence belongs to the class-II aminoacyl-tRNA synthetase family. In terms of assembly, homodimer. Zn(2+) serves as cofactor.

Its subcellular location is the cytoplasm. It carries out the reaction tRNA(Thr) + L-threonine + ATP = L-threonyl-tRNA(Thr) + AMP + diphosphate + H(+). Its function is as follows. Catalyzes the attachment of threonine to tRNA(Thr) in a two-step reaction: L-threonine is first activated by ATP to form Thr-AMP and then transferred to the acceptor end of tRNA(Thr). Also edits incorrectly charged L-seryl-tRNA(Thr). The protein is Threonine--tRNA ligase of Halalkalibacterium halodurans (strain ATCC BAA-125 / DSM 18197 / FERM 7344 / JCM 9153 / C-125) (Bacillus halodurans).